A 204-amino-acid polypeptide reads, in one-letter code: uncharacterized protein (204 aa).

Residues 160–180 form a helical membrane-spanning segment; sequence GLTVAAIASVVVAGAVTYLVV.

The protein to M.pneumoniae MPN_373 C-terminal region.

The protein localises to the cell membrane. This is an uncharacterized protein from Mycoplasma pneumoniae (strain ATCC 29342 / M129 / Subtype 1) (Mycoplasmoides pneumoniae).